Here is a 391-residue protein sequence, read N- to C-terminus: Pectate lyase B (391 aa).

A signal peptide spans Met-1 to Ala-30. Asp-181, Asp-203, and Asp-207 together coordinate Ca(2+). The active site involves Arg-305.

It belongs to the polysaccharide lyase 1 family. Requires Ca(2+) as cofactor.

Its subcellular location is the secreted. The catalysed reaction is Eliminative cleavage of (1-&gt;4)-alpha-D-galacturonan to give oligosaccharides with 4-deoxy-alpha-D-galact-4-enuronosyl groups at their non-reducing ends.. The enzyme catalyses Eliminative cleavage of (1-&gt;4)-alpha-D-galacturonan methyl ester to give oligosaccharides with 4-deoxy-6-O-methyl-alpha-D-galact-4-enuronosyl groups at their non-reducing ends.. The protein operates within glycan metabolism; pectin degradation. Its function is as follows. Catalyzes the depolymerization of both polygalacturonate and pectins of various methyl esterification degree, with an endo mode of action. Shows the highest activity on 20 to 34% methylated pectin but retains 67%, 51%, 25%, and 1% of its maximum activity on polygalacturonate and 8.5%, 55 to 70%, and 90% methylated pectin, respectively. In Paenibacillus amylolyticus, this protein is Pectate lyase B.